A 257-amino-acid polypeptide reads, in one-letter code: Large ribosomal subunit protein uL2 (257 aa).

The segment at 210-231 (PHGGGNHQHIGKASTVKRGTSA) is disordered.

It belongs to the universal ribosomal protein uL2 family.

The protein localises to the cytoplasm. In Mamestra brassicae (Cabbage moth), this protein is Large ribosomal subunit protein uL2 (RpL8).